The following is a 579-amino-acid chain: Moesin a (579 aa).

The region spanning 5-295 is the FERM domain; the sequence is ISVRVTTMDA…GNHELYMRRR (291 aa). The stretch at 306-448 forms a coiled coil; it reads KAQAKEEKNH…EDEALEWQTK (143 aa). Disordered regions lie at residues 308–341, 376–418, and 464–519; these read QAKEEKNHKKMERALLEDERKKREQAEKEKEKIE, EQER…EHLA, and KNKV…KNER. A compositionally biased stretch (basic and acidic residues) spans 376–400; sequence EQERKRAQEEAERLERERRLAEEAK. Low complexity predominate over residues 490-501; sequence AEASAELTSAAA. A compositionally biased stretch (basic and acidic residues) spans 502–519; the sequence is YKDRSEEERMTEAEKNER. The stretch at 517–551 forms a coiled coil; sequence NERVQKHLLALTSELANARDETKKTQNDIIHAENV.

It is found in the cell membrane. The protein localises to the cell junction. In terms of biological role, positively regulates endothelial adherens junction formation and stabilization. Is thereby required for intersegmental vessel luminal membrane formation and stabilization during tubulogenesis in the early stages of development, independent of blood flow dynamics. The chain is Moesin a from Danio rerio (Zebrafish).